A 119-amino-acid chain; its full sequence is Acidic phospholipase A2 2 (119 aa).

7 disulfide bridges follow: cysteine 11–cysteine 71, cysteine 26–cysteine 118, cysteine 28–cysteine 44, cysteine 43–cysteine 99, cysteine 50–cysteine 92, cysteine 60–cysteine 85, and cysteine 78–cysteine 90. Tyrosine 27, glycine 29, and glycine 31 together coordinate Ca(2+). Histidine 47 is an active-site residue. Aspartate 48 is a Ca(2+) binding site. Residue aspartate 93 is part of the active site.

The protein belongs to the phospholipase A2 family. Group I subfamily. D49 sub-subfamily. As to quaternary structure, homotrimer. Ca(2+) serves as cofactor. Expressed by the venom gland.

It localises to the secreted. The catalysed reaction is a 1,2-diacyl-sn-glycero-3-phosphocholine + H2O = a 1-acyl-sn-glycero-3-phosphocholine + a fatty acid + H(+). PLA2 catalyzes the calcium-dependent hydrolysis of the 2-acyl groups in 3-sn-phosphoglycerides. The polypeptide is Acidic phospholipase A2 2 (Naja naja (Indian cobra)).